We begin with the raw amino-acid sequence, 231 residues long: Adenosylcobinamide-GDP ribazoletransferase (231 aa).

5 helical membrane-spanning segments follow: residues 28-48 (LWLF…PHFI), 97-117 (TGAG…TLLY), 121-141 (FWEI…LMLL), 162-182 (VFIG…ESLA), and 209-229 (VIGS…TIAG).

Belongs to the CobS family. Requires Mg(2+) as cofactor.

It is found in the cell membrane. It carries out the reaction alpha-ribazole + adenosylcob(III)inamide-GDP = adenosylcob(III)alamin + GMP + H(+). The catalysed reaction is alpha-ribazole 5'-phosphate + adenosylcob(III)inamide-GDP = adenosylcob(III)alamin 5'-phosphate + GMP + H(+). It functions in the pathway cofactor biosynthesis; adenosylcobalamin biosynthesis; adenosylcobalamin from cob(II)yrinate a,c-diamide: step 7/7. Functionally, joins adenosylcobinamide-GDP and alpha-ribazole to generate adenosylcobalamin (Ado-cobalamin). Also synthesizes adenosylcobalamin 5'-phosphate from adenosylcobinamide-GDP and alpha-ribazole 5'-phosphate. The sequence is that of Adenosylcobinamide-GDP ribazoletransferase (cobS2) from Archaeoglobus fulgidus (strain ATCC 49558 / DSM 4304 / JCM 9628 / NBRC 100126 / VC-16).